We begin with the raw amino-acid sequence, 151 residues long: Small ribosomal subunit protein bS6 (151 aa).

The segment at 97–151 (EAEPSAMMQKRDRDDRKDRDRGDRPRRRDDDFGGGDRGDRGDRGDRPERNFGGEN) is disordered. Residues 105 to 151 (QKRDRDDRKDRDRGDRPRRRDDDFGGGDRGDRGDRGDRPERNFGGEN) show a composition bias toward basic and acidic residues.

It belongs to the bacterial ribosomal protein bS6 family.

Its function is as follows. Binds together with bS18 to 16S ribosomal RNA. The sequence is that of Small ribosomal subunit protein bS6 from Methylorubrum populi (strain ATCC BAA-705 / NCIMB 13946 / BJ001) (Methylobacterium populi).